We begin with the raw amino-acid sequence, 616 residues long: MALLQISEPGLSAAPHQRRLAAGIDLGTTNSLVATVRSGQAETLADHEGRHLLPSVVHYQQQGHSVGYDARTNAALDTANTISSVKRLMGRSLADIQQRYPHLPYQFQASENGLPMIETAAGLLNPVRVSADILKALAARATEALAGELDGVVITVPAYFDDAQRQGTKDAARLAGLHVLRLLNEPTAAAIAYGLDSGQEGVIAVYDLGGGTFDISILRLSRGVFEVLATGGDSALGGDDFDHLLADYIREQAGIPDRSDNRVQRELLDAAIAAKIALSDAVSVTVNVAGWQGEISREQFNELIAPLVKRTLLACRRALKDAGVEADEVLEVVMVGGSTRVPLVRERVGEFFGRPPLTSIDPDKVVAIGAAIQADILVGNKPDSEMLLLDVIPLSLGLETMGGLVEKVIPRNTTIPVARAQDFTTFKDGQMAMSIHVMQGERELVQDCRSLARFALRGIPALPAGGAHIRVTFQVDADGLLSVTAMEKSTGVEASIQVKPSYGLTDSEIASMIKDSMSYAEQDVKARMLAEQKVEAARVLESLHGALAADAALLSAAERQVIDNAAAHLSEVAQGDDVDAIEQAIKNVDKQTQDFAARRMDQSVRRALKGHSVDEV.

It belongs to the heat shock protein 70 family.

Its function is as follows. Chaperone involved in the maturation of iron-sulfur cluster-containing proteins. Has a low intrinsic ATPase activity which is markedly stimulated by HscB. Involved in the maturation of IscU. The polypeptide is Chaperone protein HscA (Escherichia coli O7:K1 (strain IAI39 / ExPEC)).